The primary structure comprises 476 residues: 3-ketoacyl-CoA synthase 12 (476 aa).

Positions 1–25 are cleaved as a signal peptide; it reads MDLLFLFFSLLLSYLFFKIWKLIDS. The 288-residue stretch at 26–313 folds into the FAE domain; that stretch reads KQDKDCYILD…FMLKLLIKKI (288 aa). Residues cysteine 168, histidine 247, histidine 344, histidine 348, histidine 377, and asparagine 381 contribute to the active site.

It belongs to the thiolase-like superfamily. Chalcone/stilbene synthases family. Expressed in siliques, flowers and leaves.

It is found in the endoplasmic reticulum. It carries out the reaction a very-long-chain acyl-CoA + malonyl-CoA + H(+) = a very-long-chain 3-oxoacyl-CoA + CO2 + CoA. It functions in the pathway lipid metabolism; fatty acid biosynthesis. The polypeptide is 3-ketoacyl-CoA synthase 12 (Arabidopsis thaliana (Mouse-ear cress)).